Reading from the N-terminus, the 63-residue chain is Large ribosomal subunit protein uL29 (63 aa).

It belongs to the universal ribosomal protein uL29 family.

The protein is Large ribosomal subunit protein uL29 of Flavobacterium psychrophilum (strain ATCC 49511 / DSM 21280 / CIP 103535 / JIP02/86).